The sequence spans 153 residues: SsrA-binding protein (153 aa).

Residues 129 to 153 (KREDMKKKDQSREMAQALREKSKSH) are disordered.

This sequence belongs to the SmpB family.

The protein localises to the cytoplasm. In terms of biological role, required for rescue of stalled ribosomes mediated by trans-translation. Binds to transfer-messenger RNA (tmRNA), required for stable association of tmRNA with ribosomes. tmRNA and SmpB together mimic tRNA shape, replacing the anticodon stem-loop with SmpB. tmRNA is encoded by the ssrA gene; the 2 termini fold to resemble tRNA(Ala) and it encodes a 'tag peptide', a short internal open reading frame. During trans-translation Ala-aminoacylated tmRNA acts like a tRNA, entering the A-site of stalled ribosomes, displacing the stalled mRNA. The ribosome then switches to translate the ORF on the tmRNA; the nascent peptide is terminated with the 'tag peptide' encoded by the tmRNA and targeted for degradation. The ribosome is freed to recommence translation, which seems to be the essential function of trans-translation. The chain is SsrA-binding protein from Geobacter sulfurreducens (strain ATCC 51573 / DSM 12127 / PCA).